Here is a 421-residue protein sequence, read N- to C-terminus: Glutamyl-tRNA reductase (421 aa).

Substrate-binding positions include 49–52, Ser-109, 114–116, and Gln-120; these read TCNR and EAQ. The active-site Nucleophile is Cys-50. 189-194 provides a ligand contact to NADP(+); it reads GAGEMC.

It belongs to the glutamyl-tRNA reductase family. As to quaternary structure, homodimer.

The catalysed reaction is (S)-4-amino-5-oxopentanoate + tRNA(Glu) + NADP(+) = L-glutamyl-tRNA(Glu) + NADPH + H(+). It participates in porphyrin-containing compound metabolism; protoporphyrin-IX biosynthesis; 5-aminolevulinate from L-glutamyl-tRNA(Glu): step 1/2. Its function is as follows. Catalyzes the NADPH-dependent reduction of glutamyl-tRNA(Glu) to glutamate 1-semialdehyde (GSA). In Magnetococcus marinus (strain ATCC BAA-1437 / JCM 17883 / MC-1), this protein is Glutamyl-tRNA reductase.